Consider the following 87-residue polypeptide: Small ribosomal subunit protein bS20 (87 aa).

Residues 1-27 (MANIKSAKKRALQSERRRQHNASRRSM) are compositionally biased toward basic residues. Residues 1–31 (MANIKSAKKRALQSERRRQHNASRRSMTRTS) form a disordered region.

This sequence belongs to the bacterial ribosomal protein bS20 family.

Functionally, binds directly to 16S ribosomal RNA. This is Small ribosomal subunit protein bS20 from Pseudoalteromonas atlantica (strain T6c / ATCC BAA-1087).